The following is a 500-amino-acid chain: NAD(P)H-quinone oxidoreductase chain 4, chloroplastic (500 aa).

The next 15 helical transmembrane spans lie at 4–24, 35–55, 87–107, 113–130, 134–154, 167–187, 211–231, 242–262, 272–292, 305–325, 330–350, 364–384, 386–406, 416–436, and 463–483; these read FPWLTIIVILPIFAGSLIFFL, YTIFICIFELLLTAYTFCYHF, IGPILLTGFITTLATLAAWPV, LFNFLMLAMYSAQIGLFS, LLLFFIMWELELIPVYLLLSM, FILYTAGGSIFLLMGVLGIGL, IIFYIGFFIAFAVKLPIIPLH, HYSTCMLLAGILLKMGAYGLV, AHSIFSPWLLIVGTIQIIYAA, IAYSSVSHMGFIIIGIGSITD, GALLQIISHGFIGAALFFLAG, MGGIAILMPKIFTIFSTFSMA, LALPGMSGFVAELIVFFGIIT, ILITFVMAIGMILTPIYSLSM, and FLSISLFLPVLGIGMYPDFIF.

Belongs to the complex I subunit 4 family.

It is found in the plastid. Its subcellular location is the chloroplast thylakoid membrane. It catalyses the reaction a plastoquinone + NADH + (n+1) H(+)(in) = a plastoquinol + NAD(+) + n H(+)(out). The catalysed reaction is a plastoquinone + NADPH + (n+1) H(+)(in) = a plastoquinol + NADP(+) + n H(+)(out). The chain is NAD(P)H-quinone oxidoreductase chain 4, chloroplastic from Coffea arabica (Arabian coffee).